The following is a 263-amino-acid chain: Tryptophan synthase alpha chain (263 aa).

Residues Glu-46 and Asp-57 each act as proton acceptor in the active site.

Belongs to the TrpA family. Tetramer of two alpha and two beta chains.

It carries out the reaction (1S,2R)-1-C-(indol-3-yl)glycerol 3-phosphate + L-serine = D-glyceraldehyde 3-phosphate + L-tryptophan + H2O. It functions in the pathway amino-acid biosynthesis; L-tryptophan biosynthesis; L-tryptophan from chorismate: step 5/5. Functionally, the alpha subunit is responsible for the aldol cleavage of indoleglycerol phosphate to indole and glyceraldehyde 3-phosphate. The sequence is that of Tryptophan synthase alpha chain from Bacteroides fragilis (strain ATCC 25285 / DSM 2151 / CCUG 4856 / JCM 11019 / LMG 10263 / NCTC 9343 / Onslow / VPI 2553 / EN-2).